A 101-amino-acid chain; its full sequence is Small ribosomal subunit protein uS10 (101 aa).

It belongs to the universal ribosomal protein uS10 family. As to quaternary structure, part of the 30S ribosomal subunit.

Functionally, involved in the binding of tRNA to the ribosomes. This chain is Small ribosomal subunit protein uS10, found in Parabacteroides distasonis (strain ATCC 8503 / DSM 20701 / CIP 104284 / JCM 5825 / NCTC 11152).